A 244-amino-acid polypeptide reads, in one-letter code: Orotidine 5'-phosphate decarboxylase (244 aa).

Substrate-binding positions include Asp-20, Lys-42, Asp-70–Thr-79, Thr-125, Arg-186, Gln-195, Gly-215, and Arg-216. Lys-72 (proton donor) is an active-site residue.

Belongs to the OMP decarboxylase family. Type 1 subfamily. Homodimer.

It carries out the reaction orotidine 5'-phosphate + H(+) = UMP + CO2. Its pathway is pyrimidine metabolism; UMP biosynthesis via de novo pathway; UMP from orotate: step 2/2. Functionally, catalyzes the decarboxylation of orotidine 5'-monophosphate (OMP) to uridine 5'-monophosphate (UMP). This chain is Orotidine 5'-phosphate decarboxylase, found in Xylella fastidiosa (strain M23).